The following is a 1162-amino-acid chain: ATP-dependent helicase/deoxyribonuclease subunit B (1162 aa).

The UvrD-like helicase ATP-binding domain maps to 1 to 275; the sequence is MELNAYIGRA…QFFKQQYRFN (275 aa). Residue 8–15 participates in ATP binding; it reads GRAGTGKS. A UvrD-like helicase C-terminal domain is found at 269–583; the sequence is KQQYRFNNKD…SIGTMDLAKV (315 aa). [4Fe-4S] cluster contacts are provided by Cys-784, Cys-1117, Cys-1120, and Cys-1126.

Belongs to the helicase family. AddB/RexB type 1 subfamily. As to quaternary structure, heterodimer of AddA and AddB. It depends on Mg(2+) as a cofactor. [4Fe-4S] cluster is required as a cofactor.

In terms of biological role, the heterodimer acts as both an ATP-dependent DNA helicase and an ATP-dependent, dual-direction single-stranded exonuclease. Recognizes the chi site generating a DNA molecule suitable for the initiation of homologous recombination. The AddB subunit has 5' -&gt; 3' nuclease activity but not helicase activity. This Staphylococcus haemolyticus (strain JCSC1435) protein is ATP-dependent helicase/deoxyribonuclease subunit B.